The sequence spans 203 residues: Endo-type membrane-bound lytic murein transglycosylase A (203 aa).

An N-terminal signal peptide occupies residues 1–15; sequence MKLRWFAFLVVLLAG. Cys-16 carries the N-palmitoyl cysteine lipid modification. Residue Cys-16 is the site of S-diacylglycerol cysteine attachment.

The protein belongs to the transglycosylase Slt family.

It localises to the cell outer membrane. It carries out the reaction Endolytic cleavage of the (1-&gt;4)-beta-glycosidic linkage between N-acetylmuramic acid (MurNAc) and N-acetylglucosamine (GlcNAc) residues in peptidoglycan with concomitant formation of a 1,6-anhydrobond in the MurNAc residue.. In terms of biological role, murein-degrading enzyme. May play a role in recycling of muropeptides during cell elongation and/or cell division. Preferentially cleaves at a distance of more than two disaccharide units from the ends of the glycan chain. In Escherichia fergusonii (strain ATCC 35469 / DSM 13698 / CCUG 18766 / IAM 14443 / JCM 21226 / LMG 7866 / NBRC 102419 / NCTC 12128 / CDC 0568-73), this protein is Endo-type membrane-bound lytic murein transglycosylase A.